A 714-amino-acid polypeptide reads, in one-letter code: Fatty acid oxidation complex subunit alpha (714 aa).

The tract at residues 1–190 is enoyl-CoA hydratase; the sequence is MEMASAFTLN…KLGLVDDVVP (190 aa). The interval 306-714 is 3-hydroxyacyl-CoA dehydrogenase; that stretch reads APLNSVGILG…FWKTTATDLQ (409 aa).

It in the N-terminal section; belongs to the enoyl-CoA hydratase/isomerase family. In the central section; belongs to the 3-hydroxyacyl-CoA dehydrogenase family. As to quaternary structure, heterotetramer of two alpha chains (FadJ) and two beta chains (FadI).

The protein localises to the cytoplasm. It carries out the reaction a (3S)-3-hydroxyacyl-CoA = a (2E)-enoyl-CoA + H2O. The catalysed reaction is a 4-saturated-(3S)-3-hydroxyacyl-CoA = a (3E)-enoyl-CoA + H2O. The enzyme catalyses a (3S)-3-hydroxyacyl-CoA + NAD(+) = a 3-oxoacyl-CoA + NADH + H(+). It catalyses the reaction (3S)-3-hydroxybutanoyl-CoA = (3R)-3-hydroxybutanoyl-CoA. Its pathway is lipid metabolism; fatty acid beta-oxidation. Catalyzes the formation of a hydroxyacyl-CoA by addition of water on enoyl-CoA. Also exhibits 3-hydroxyacyl-CoA epimerase and 3-hydroxyacyl-CoA dehydrogenase activities. The sequence is that of Fatty acid oxidation complex subunit alpha from Escherichia coli O17:K52:H18 (strain UMN026 / ExPEC).